The following is a 242-amino-acid chain: MAGHSKWANIKHKKAAADAKKGKVWTRLIKEIQVAARMGGGDIDSNPRLRLAVDKAYDANMPKDNINRAIQRGVGGVDGANYEEIRYEGYGIGGAAIIVDTMTDNRTRTVAEVRHAFSKFGGNMGTDGSVSFMFDHVGQFLFAPGTPEDKLMDAALEAGADDVVTNEDGSIEVICPPNDFSKVKAALETAGFKAELAEVTMKPQTEVEFAGDDAVKMQKLLDALENLDDVQEVYTNAAIADE.

This sequence belongs to the TACO1 family.

It localises to the cytoplasm. This is Probable transcriptional regulatory protein Bphy_2064 from Paraburkholderia phymatum (strain DSM 17167 / CIP 108236 / LMG 21445 / STM815) (Burkholderia phymatum).